Here is a 292-residue protein sequence, read N- to C-terminus: Siderophore triacetylfusarinine C esterase (292 aa).

Triacetylfusarinine C contacts are provided by Arg-97, Ser-148, Tyr-149, Ser-174, Trp-176, and His-267.

The protein belongs to the esterase D family.

It is found in the cytoplasm. It carries out the reaction triacetylfusarinine C + 3 H2O = 3 N-acetylfusarinine + Fe(3+). In terms of biological role, displays specific triacetylfusarinine C (TAFC) esterase activity but does not hydrolyze fusarinine C, which has the same core structure as TAFC. Hydrolysis optimizes but is not essential for TAFC-mediated iron uptake. Both extra- and intracellular siderophores have been shown to be crucial for the virulence. Subsequent to chelation of iron and uptake, FsC and TAFC are hydrolyzed and the iron is transferred to the metabolism or to the intracellular siderophore ferricrocin (FC) for transport and storage of iron. Hydrolyzes both TAFC and DF-TAFC with equal efficiencies, suggesting that its function might not be restricted to the release of iron from the siderophore but might also include the degradation of the iron-free chelator to protect cells. This is Siderophore triacetylfusarinine C esterase from Aspergillus fumigatus (strain ATCC MYA-4609 / CBS 101355 / FGSC A1100 / Af293) (Neosartorya fumigata).